A 60-amino-acid polypeptide reads, in one-letter code: Large ribosomal subunit protein bL32 (60 aa).

Positions 1-28 (MAVQQNKKSRSKRDMRRSHDALTGPTLS) are disordered. Residues 7 to 16 (KKSRSKRDMR) show a composition bias toward basic residues.

The protein belongs to the bacterial ribosomal protein bL32 family.

The chain is Large ribosomal subunit protein bL32 from Cellvibrio japonicus (strain Ueda107) (Pseudomonas fluorescens subsp. cellulosa).